The primary structure comprises 313 residues: uncharacterized protein (313 aa).

The next 9 membrane-spanning stretches (helical) occupy residues 31 to 53 (AWGI…GWLF), 62 to 84 (LFLF…WNPY), 104 to 126 (VFFW…IYTS), 147 to 161 (FALL…NQSV), 166 to 185 (SMFW…SFLL), 198 to 220 (RVLK…ALRF), 225 to 244 (SFSG…YLII), 264 to 282 (FFAA…TSSF), and 286 to 308 (PAAM…SILI).

Its subcellular location is the cell membrane. This is an uncharacterized protein from Archaeoglobus fulgidus (strain ATCC 49558 / DSM 4304 / JCM 9628 / NBRC 100126 / VC-16).